The chain runs to 262 residues: MIDKSAFVHPTAIVEEGASIGANAHIGPFCIVGPHVEIGEGTVLKSHVVVNGHTKIGRDNEIYQFASIGEVNQDLKYAGEPTRVEIGDRNRIRESVTIHRGTVQGGGLTKVGSDNLLMINAHIAHDCTVGNRCILANNATLAGHVSVDDFAIIGGMTAVHQFCIIGAHVMVGGCSGVAQDVPPYVIAQGNHATPFGVNIEGLKRRGFSREAITAIRNAYKLIYRSGKTLDEVKPEIAELAETYPEVKAFTDFFARSTRGLIR.

The protein belongs to the transferase hexapeptide repeat family. LpxA subfamily. Homotrimer.

Its subcellular location is the cytoplasm. The catalysed reaction is a (3R)-hydroxyacyl-[ACP] + UDP-N-acetyl-alpha-D-glucosamine = a UDP-3-O-[(3R)-3-hydroxyacyl]-N-acetyl-alpha-D-glucosamine + holo-[ACP]. It functions in the pathway glycolipid biosynthesis; lipid IV(A) biosynthesis; lipid IV(A) from (3R)-3-hydroxytetradecanoyl-[acyl-carrier-protein] and UDP-N-acetyl-alpha-D-glucosamine: step 1/6. Its function is as follows. Involved in the biosynthesis of lipid A, a phosphorylated glycolipid that anchors the lipopolysaccharide to the outer membrane of the cell. This Shigella dysenteriae serotype 1 (strain Sd197) protein is Acyl-[acyl-carrier-protein]--UDP-N-acetylglucosamine O-acyltransferase.